Reading from the N-terminus, the 316-residue chain is Acetaldehyde dehydrogenase 1 (316 aa).

12–15 (SGNI) is a binding site for NAD(+). Residue cysteine 132 is the Acyl-thioester intermediate of the active site. Residues 163 to 171 (SAGPGTRAN) and asparagine 291 contribute to the NAD(+) site.

Belongs to the acetaldehyde dehydrogenase family.

It catalyses the reaction acetaldehyde + NAD(+) + CoA = acetyl-CoA + NADH + H(+). In Pseudomonas putida (strain ATCC 700007 / DSM 6899 / JCM 31910 / BCRC 17059 / LMG 24140 / F1), this protein is Acetaldehyde dehydrogenase 1.